The chain runs to 508 residues: Serine/threonine-protein kinase VRK2 (508 aa).

The 291-residue stretch at tryptophan 29–proline 319 folds into the Protein kinase domain. ATP-binding positions include isoleucine 35–isoleucine 43 and lysine 61. The Proton acceptor role is filled by aspartate 166. Threonine 336 carries the phosphothreonine modification. Residues threonine 397–leucine 508 are interaction with MAP3K7. A Phosphoserine modification is found at serine 406. Residues valine 487–phenylalanine 507 form a helical; Anchor for type IV membrane protein membrane-spanning segment.

The protein belongs to the protein kinase superfamily. CK1 Ser/Thr protein kinase family. VRK subfamily. As to quaternary structure, isoform 1 interacts with MAP3K7, MAP2K7, MAP2K1 and KSR1. Isoform 1 and isoform 2 interact with RAN and MAPK8IP1. In terms of assembly, (Microbial infection) Isoform 1 interacts with Epstein-Barr virus BHRF1; this interaction is involved in protecting cells from apoptosis. (Microbial infection) Isoform 1 interacts with vaccinia protein B12. In terms of processing, autophosphorylated. In terms of tissue distribution, isoform 1 and isoform 2 are expressed in various tumor cell lines. Expression of isoform 1 inversely correlates with ERBB2 in breast carcinomas (at protein level). Widely expressed. Highly expressed in fetal liver, skeletal muscle, pancreas, heart, peripheral blood leukocytes and testis.

Its subcellular location is the cytoplasm. The protein resides in the endoplasmic reticulum membrane. The protein localises to the mitochondrion membrane. It localises to the nucleus envelope. It is found in the nucleus. The enzyme catalyses L-seryl-[protein] + ATP = O-phospho-L-seryl-[protein] + ADP + H(+). It catalyses the reaction L-threonyl-[protein] + ATP = O-phospho-L-threonyl-[protein] + ADP + H(+). With respect to regulation, RAN inhibits its autophosphorylation and its ability to phosphorylate histone H3. In terms of biological role, serine/threonine kinase that regulates several signal transduction pathways. Isoform 1 modulates the stress response to hypoxia and cytokines, such as interleukin-1 beta (IL1B) and this is dependent on its interaction with MAPK8IP1, which assembles mitogen-activated protein kinase (MAPK) complexes. Inhibition of signal transmission mediated by the assembly of MAPK8IP1-MAPK complexes reduces JNK phosphorylation and JUN-dependent transcription. Phosphorylates 'Thr-18' of p53/TP53, histone H3, and may also phosphorylate MAPK8IP1. Phosphorylates BANF1 and disrupts its ability to bind DNA and reduces its binding to LEM domain-containing proteins. Down-regulates the transactivation of transcription induced by ERBB2, HRAS, BRAF, and MEK1. Blocks the phosphorylation of ERK in response to ERBB2 and HRAS. Can also phosphorylate the following substrates that are commonly used to establish in vitro kinase activity: casein, MBP and histone H2B, but it is not sure that this is physiologically relevant. Its function is as follows. Phosphorylates 'Thr-18' of p53/TP53, as well as histone H3. Reduces p53/TP53 ubiquitination by MDM2, promotes p53/TP53 acetylation by EP300 and thereby increases p53/TP53 stability and activity. In Homo sapiens (Human), this protein is Serine/threonine-protein kinase VRK2 (VRK2).